Consider the following 374-residue polypeptide: Guanine nucleotide-binding protein subunit alpha-15 (374 aa).

One can recognise a G-alpha domain in the interval 41-374 (EELKLLLLGP…ARYLDEINLL (334 aa)). Positions 44–57 (KLLLLGPGESGKST) are G1 motif. Residues 49-56 (GPGESGKS), 183-189 (LRSRMPT), 208-212 (DVGGQ), 277-280 (NKTD), and A346 each bind GTP. Mg(2+)-binding residues include S56 and T189. The tract at residues 181–189 (DVLRSRMPT) is G2 motif. The tract at residues 204 to 213 (LRIVDVGGQR) is G3 motif. The segment at 273-280 (ILFLNKTD) is G4 motif. Residues 344–349 (TCATDT) are G5 motif.

This sequence belongs to the G-alpha family. G(q) subfamily. In terms of assembly, g proteins are composed of 3 units; alpha, beta and gamma. The alpha chain contains the guanine nucleotide binding site. As to expression, expressed primarily in hematopoietic cells. Coexpressed with EDG6 at the same relative levels in all tissues examined, with the highest levels in adult spleen and lung.

In terms of biological role, guanine nucleotide-binding proteins (G proteins) are involved as modulators or transducers in various transmembrane signaling systems. The protein is Guanine nucleotide-binding protein subunit alpha-15 (Gna15) of Mus musculus (Mouse).